The chain runs to 260 residues: MPNLLQKTRKITSILQRSVDSLETELPYNTMASRLADIIDCNACIINGGGSLLGYAMKYKTNTDRVEEFFETRQFPDAYVKAASRVYDTEANLSVENELTIFPVESKDIYPDGLTTIAPIYGGGMRLGTLIIWRNDNEFSDDDLVLVEISSTVVGIQLLNLQTENLEETIRKQTAVNMAINTLSYSEMKAVAAILSELDGNEGRLTASVIADRIGITRSVIVNALRKLESAGIIESRSLGMKGTYLKVINEGIFDKLKEF.

A GAF domain region spans residues 1 to 159 (MPNLLQKTRK…SSTVVGIQLL (159 aa)). The H-T-H motif DNA-binding region spans 207–226 (ASVIADRIGITRSVIVNALR).

It belongs to the CodY family.

Its subcellular location is the cytoplasm. In terms of biological role, DNA-binding global transcriptional regulator which is involved in the adaptive response to starvation and acts by directly or indirectly controlling the expression of numerous genes in response to nutrient availability. During rapid exponential growth, CodY is highly active and represses genes whose products allow adaptation to nutrient depletion. In Streptococcus equi subsp. zooepidemicus (strain MGCS10565), this protein is Global transcriptional regulator CodY.